We begin with the raw amino-acid sequence, 110 residues long: Cytochrome bo(3) ubiquinol oxidase subunit 4 (110 aa).

Residues 1–18 (MANAHDTHHEGNHGSVKS) lie on the Cytoplasmic side of the membrane. Residues 19-39 (YMIGFILSIILTAIPFGLAMS) traverse the membrane as a helical segment. Topologically, residues 40-46 (PSLPKNL) are periplasmic. The helical transmembrane segment at 47–67 (TVLIIVAMAVIQVVVHLVYFL) threads the bilayer. Topologically, residues 68 to 78 (HMDRSKEQRNN) are cytoplasmic. A helical transmembrane segment spans residues 79 to 99 (VWTFLFTTLVIALLVGLSLWI). Over 100-110 (MFSIHFEMLAK) the chain is Periplasmic.

It belongs to the cytochrome c oxidase bacterial subunit 4 family. As to quaternary structure, heterooctamer of two A chains, two B chains, two C chains and two D chains.

It is found in the cell inner membrane. Cytochrome bo(3) ubiquinol terminal oxidase is the component of the aerobic respiratory chain of E.coli that predominates when cells are grown at high aeration. Has proton pump activity across the membrane in addition to electron transfer, pumping 2 protons/electron. The polypeptide is Cytochrome bo(3) ubiquinol oxidase subunit 4 (cyoD) (Pseudomonas putida (Arthrobacter siderocapsulatus)).